The primary structure comprises 301 residues: J domain-containing protein 1 (301 aa).

Positions 58-150 constitute a J domain; it reads TPYDIFGIPK…KKKIVYDTTR (93 aa). A helical transmembrane segment spans residues 208-228; the sequence is WTVIGIICGLAICIEGTALLA.

This sequence belongs to the DnaJ family.

It is found in the mitochondrion membrane. Probable chaperone. This chain is J domain-containing protein 1 (JID1), found in Saccharomyces cerevisiae (strain ATCC 204508 / S288c) (Baker's yeast).